The primary structure comprises 98 residues: MLKMNLQLFAHKKGVGSSRNGRDSNAQRLGVKRGDGQFVTAGNIIVRQRGTKFHPGKNCGLGKDDTLFATIDGYVKFERKDRSRKQVSIYPERQAAQA.

A propeptide spanning residues 1-9 is cleaved from the precursor; it reads MLKMNLQLF.

This sequence belongs to the bacterial ribosomal protein bL27 family. The N-terminus is cleaved by ribosomal processing cysteine protease Prp.

In Desulfitobacterium hafniense (strain DSM 10664 / DCB-2), this protein is Large ribosomal subunit protein bL27.